The following is an 846-amino-acid chain: Protein kintoun (846 aa).

Disordered regions lie at residues 1–21 (MSTAAGSRKKHSKLHNEERAD), 372–416 (YLSR…PALT), 581–657 (HTSI…DSTI), and 743–846 (HDSS…DDEI). Position 378 is a phosphoserine (Ser378). Over residues 389-403 (PVEDDADGDMPETPE) the composition is skewed to acidic residues. Basic residues-rich tracts occupy residues 596 to 612 (LHKKPSKKQRKRNKKQR) and 750 to 766 (QRKKNQKRRNCKLRAQQ). Ser770 carries the post-translational modification Phosphoserine. Residues 821–832 (TRQDHADADAKN) are compositionally biased toward basic and acidic residues.

It belongs to the PIH1 family. Kintoun subfamily. In terms of assembly, interacts with Pp1alpha-96A, Pp1-87B, Pp1-13C and flw.

The protein localises to the cytoplasm. In terms of biological role, required for cytoplasmic pre-assembly of axonemal dyneins, thereby playing a central role in motility in cilia and flagella. Involved in pre-assembly of dynein arm complexes in the cytoplasm before intraflagellar transport loads them for the ciliary compartment. The sequence is that of Protein kintoun from Drosophila persimilis (Fruit fly).